A 415-amino-acid polypeptide reads, in one-letter code: MPEIDVGSQIFDVVFHPTFATVYTGLLNGHVKAFAYNEQGKEQAAFSVRPSKRSCRGLSIKHDGTHLYAVGKAKALKYNFISGLIIRCSVIDTATAQISTRPGAHDSTINRVKYLMPWLISTGDDDGVIKLWDPRQQECVREYTQHFDYITDFLWLDDKKQLVATSGDGTLSVMDVRSKKPEPFAQSEDQDDELLSIVAIKGHSKIVVGTQLGILSIFNRSKGWGDCVDRVPGHPLSIDALCNLPPGLPNVDPTSTVLTGSSDGYVRAVQILPTKLLGVVADHGEWPIERIAVGGGWWVGSVGHEDLLRMTDLEGFFLDQSEDKELKGALGVTNENEQSDEDEEMDVLGNDAGHPEVDGSGSSSSGESSEDSEASDGETPQAKQRKRKIEQKPLDVDKPKGRNEIDVENAFFDEL.

WD repeat units follow at residues 5-44 (DVGSQIFDVVFHPTFATVYTGLLNGHVKAFAYNEQGKEQA), 104-142 (AHDSTINRVKYLMPWLISTGDDDGVIKLWDPRQQECVRE), 145-184 (QHFDYITDFLWLDDKKQLVATSGDGTLSVMDVRSKKPEPF), 189-228 (DQDDELLSIVAIKGHSKIVVGTQLGILSIFNRSKGWGDCV), and 233-282 (GHPL…VVAD). Residues 328–415 (GALGVTNENE…DVENAFFDEL (88 aa)) are disordered. The span at 337 to 346 (EQSDEDEEMD) shows a compositional bias: acidic residues. Low complexity predominate over residues 358-367 (DGSGSSSSGE). Residues 390–405 (EQKPLDVDKPKGRNEI) show a composition bias toward basic and acidic residues.

This sequence belongs to the WD repeat WDR55 family.

The protein resides in the nucleus. Its subcellular location is the nucleolus. The protein is WD repeat-containing protein JIP5 (JIP5) of Laccaria bicolor (strain S238N-H82 / ATCC MYA-4686) (Bicoloured deceiver).